A 100-amino-acid polypeptide reads, in one-letter code: RxLR effector protein Avrblb2 (100 aa).

A signal peptide spans 1 to 22 (MRSFLYGVLAFAVLARSSAVAA). The RxLR-dEER signature appears at 43-57 (RSLRIEAQEVIQSGR). Residues 78-82 (RPDIK) carry the Calmodulin-binding motif motif.

The protein belongs to the RxLR effector family. As to quaternary structure, interacts with the host papain-like cysteine protease C14. Interacts with the host calmodulin.

The protein resides in the secreted. Its subcellular location is the host cell membrane. Its function is as follows. Secreted effector that acts as an elicitor of hypersensitive response (HR) specifically on plants carrying defense protein Rpi-blb2. Enhances P.infestans colonization of Nicotiana benthamiana leaves. Interacts with, and subsequently prevents secretion into the apoplast of the host papain-like cysteine protease C14, thus promoting virulence by interfering with the execution of host defenses. Associates with calmodulin at the host plasma membrane to interfere with plant defense-associated calcium signaling in hosts. The polypeptide is RxLR effector protein Avrblb2 (Phytophthora infestans (strain T30-4) (Potato late blight agent)).